The chain runs to 307 residues: Aspartate carbamoyltransferase catalytic subunit (307 aa).

Carbamoyl phosphate contacts are provided by Arg-54 and Thr-55. Residue Lys-83 participates in L-aspartate binding. 3 residues coordinate carbamoyl phosphate: Arg-104, His-132, and Gln-135. 2 residues coordinate L-aspartate: Arg-165 and Arg-228. Leu-267 and Pro-268 together coordinate carbamoyl phosphate.

It belongs to the aspartate/ornithine carbamoyltransferase superfamily. ATCase family. Heterododecamer (2C3:3R2) of six catalytic PyrB chains organized as two trimers (C3), and six regulatory PyrI chains organized as three dimers (R2).

The enzyme catalyses carbamoyl phosphate + L-aspartate = N-carbamoyl-L-aspartate + phosphate + H(+). It functions in the pathway pyrimidine metabolism; UMP biosynthesis via de novo pathway; (S)-dihydroorotate from bicarbonate: step 2/3. Functionally, catalyzes the condensation of carbamoyl phosphate and aspartate to form carbamoyl aspartate and inorganic phosphate, the committed step in the de novo pyrimidine nucleotide biosynthesis pathway. This chain is Aspartate carbamoyltransferase catalytic subunit, found in Clostridium acetobutylicum (strain ATCC 824 / DSM 792 / JCM 1419 / IAM 19013 / LMG 5710 / NBRC 13948 / NRRL B-527 / VKM B-1787 / 2291 / W).